The primary structure comprises 547 residues: Chaperonin GroEL (547 aa).

ATP is bound by residues Thr30–Pro33, Lys51, Asp87–Thr91, Gly415, Asn479–Ala481, and Asp495.

This sequence belongs to the chaperonin (HSP60) family. In terms of assembly, forms a cylinder of 14 subunits composed of two heptameric rings stacked back-to-back. Interacts with the co-chaperonin GroES.

It localises to the cytoplasm. The catalysed reaction is ATP + H2O + a folded polypeptide = ADP + phosphate + an unfolded polypeptide.. Together with its co-chaperonin GroES, plays an essential role in assisting protein folding. The GroEL-GroES system forms a nano-cage that allows encapsulation of the non-native substrate proteins and provides a physical environment optimized to promote and accelerate protein folding. The polypeptide is Chaperonin GroEL (Pseudomonas paraeruginosa (strain DSM 24068 / PA7) (Pseudomonas aeruginosa (strain PA7))).